The primary structure comprises 614 residues: Membrane protein insertase YidC (614 aa).

A helical membrane pass occupies residues 6 to 26 (IVLLIIFSTSLLFLWDAWIKE). Polar residues-rich tracts occupy residues 34–48 (PAIT…STQS) and 60–70 (ELTSSQASPDT). A disordered region spans residues 34–87 (PAITQADSSAGSTQSRNDDSLPVPGSELTSSQASPDTNGIPASGGNGDSVTPRL). The next 4 helical transmembrane spans lie at 380-400 (WGVA…PLSA), 450-470 (FPIL…LAAV), 484-504 (LSSP…MFVQ), and 524-544 (PVAF…YSLV). The segment at 562–614 (TAPSKDTPEPPVSKQVNSSENPETTANSPADSPKQPQTPANNPRKMYKRTRKK) is disordered. Residues 575 to 602 (KQVNSSENPETTANSPADSPKQPQTPAN) show a composition bias toward polar residues.

The protein belongs to the OXA1/ALB3/YidC family. Type 1 subfamily. In terms of assembly, interacts with the Sec translocase complex via SecD. Specifically interacts with transmembrane segments of nascent integral membrane proteins during membrane integration.

It localises to the cell inner membrane. In terms of biological role, required for the insertion and/or proper folding and/or complex formation of integral membrane proteins into the membrane. Involved in integration of membrane proteins that insert both dependently and independently of the Sec translocase complex, as well as at least some lipoproteins. Aids folding of multispanning membrane proteins. In Nitrosomonas europaea (strain ATCC 19718 / CIP 103999 / KCTC 2705 / NBRC 14298), this protein is Membrane protein insertase YidC.